We begin with the raw amino-acid sequence, 330 residues long: Phosphate acyltransferase (330 aa).

It belongs to the PlsX family. As to quaternary structure, homodimer. Probably interacts with PlsY.

It is found in the cytoplasm. It carries out the reaction a fatty acyl-[ACP] + phosphate = an acyl phosphate + holo-[ACP]. It participates in lipid metabolism; phospholipid metabolism. Functionally, catalyzes the reversible formation of acyl-phosphate (acyl-PO(4)) from acyl-[acyl-carrier-protein] (acyl-ACP). This enzyme utilizes acyl-ACP as fatty acyl donor, but not acyl-CoA. In Streptococcus pneumoniae (strain P1031), this protein is Phosphate acyltransferase.